The chain runs to 210 residues: Cell division protein SepF (210 aa).

Low complexity-rich tracts occupy residues 36-47 and 59-69; these read QQQQTPAAVPTQ and RASATTATTAS. Disordered stretches follow at residues 36-69 and 182-210; these read QQQQ…TTAS and NEMS…QMIQ.

The protein belongs to the SepF family. As to quaternary structure, homodimer. Interacts with FtsZ.

Its subcellular location is the cytoplasm. Its function is as follows. Cell division protein that is part of the divisome complex and is recruited early to the Z-ring. Probably stimulates Z-ring formation, perhaps through the cross-linking of FtsZ protofilaments. Its function overlaps with FtsA. In Trichodesmium erythraeum (strain IMS101), this protein is Cell division protein SepF.